The following is a 127-amino-acid chain: Protein ApaG (127 aa).

Residues 3–127 (NNPSSKIEVA…FVLSVPRTLH (125 aa)) enclose the ApaG domain.

The protein is Protein ApaG of Xylella fastidiosa (strain M23).